Consider the following 1531-residue polypeptide: Probable outer membrane protein PmpD (1531 aa).

A signal peptide spans 1–20; that stretch reads MSSEKDIKSTCSKFSLSVVA. In terms of domain architecture, Autotransporter spans 1244–1531; it reads EFDYSTNVWG…EANTGLRLIF (288 aa).

This sequence belongs to the PMP outer membrane protein family.

Its subcellular location is the secreted. It is found in the cell wall. The protein localises to the cell outer membrane. This chain is Probable outer membrane protein PmpD (pmpD), found in Chlamydia trachomatis serovar D (strain ATCC VR-885 / DSM 19411 / UW-3/Cx).